Here is a 545-residue protein sequence, read N- to C-terminus: Sensory neuron membrane protein 1 (545 aa).

Residues 1 to 10 (MELKERNFKK) are Cytoplasmic-facing. The chain crosses the membrane as a helical span at residues 11–31 (IGLICVAVLLCGMVFSYGIFP). The Extracellular portion of the chain corresponds to 32 to 464 (SILRFMIKQN…LFLGLKFNAT (433 aa)). Residues N69, N214, and N227 are each glycosylated (N-linked (GlcNAc...) asparagine). Intrachain disulfides connect C266–C331, C295–C351, and C333–C340. Residues N444 and N462 are each glycosylated (N-linked (GlcNAc...) asparagine). Residues 465–485 (VKWLTIIIGTVGAVGSAYMYF) traverse the membrane as a helical segment. The Cytoplasmic segment spans residues 486–545 (RKETKTTDVAPVDVSTPDTNPSSAKDGVVNVSLGRNLPPVIDGLDKPPKLRATELQQERY).

The protein belongs to the CD36 family. As to expression, selectively expressed in antenna.

Its subcellular location is the cell membrane. Its function is as follows. Plays an olfactory role that is not restricted to pheromone sensitivity. The chain is Sensory neuron membrane protein 1 (snmp1) from Anopheles gambiae (African malaria mosquito).